A 38-amino-acid chain; its full sequence is Glutathione S-transferase 2 (38 aa).

The protein belongs to the GST superfamily. Phi family.

The enzyme catalyses RX + glutathione = an S-substituted glutathione + a halide anion + H(+). Functionally, conjugation of reduced glutathione to a wide number of exogenous and endogenous hydrophobic electrophiles. In plants, may have a detoxification role against certain herbicides. In Populus euphratica (Euphrates poplar), this protein is Glutathione S-transferase 2.